Here is a 29-residue protein sequence, read N- to C-terminus: Small toxic protein ZorP (29 aa).

The helical transmembrane segment at valine 10 to leucine 27 threads the bilayer.

The protein resides in the membrane. Toxic component of a type I toxin-antitoxin (TA) system. Overexpression leads to cell stasis and a decrease in colony-forming units. Probably repressed by cognate small RNA orzP. Base pairing occurs between 18 bases in the 5' UTR of zorP mRNA and the 5' end of OrzP sRNA. This chain is Small toxic protein ZorP, found in Escherichia coli O157:H7.